Reading from the N-terminus, the 615-residue chain is Dolichyl-diphosphooligosaccharide--protein glycosyltransferase subunit 1A (615 aa).

The N-terminal stretch at 1–28 (MATPPPLRRVAALLLLLVAAASTPTARA) is a signal peptide. Over 29–437 (DLVVTRADRK…RFNNISLLRE (409 aa)) the chain is Lumenal. Lysine 187 carries the N6-acetyllysine modification. Residues asparagine 300, asparagine 353, and asparagine 431 are each glycosylated (N-linked (GlcNAc...) asparagine). Residues 438–455 (PMMLITGFFLLFMACIVY) form a helical membrane-spanning segment. Residues 456–615 (MRTDMSISKN…ESLLEYISEI (160 aa)) lie on the Cytoplasmic side of the membrane.

It belongs to the OST1 family. In terms of assembly, component of the oligosaccharyltransferase (OST) complex.

Its subcellular location is the endoplasmic reticulum membrane. It functions in the pathway protein modification; protein glycosylation. Subunit of the oligosaccharyl transferase (OST) complex that catalyzes the initial transfer of a defined glycan (Glc(3)Man(9)GlcNAc(2) in eukaryotes) from the lipid carrier dolichol-pyrophosphate to an asparagine residue within an Asn-X-Ser/Thr consensus motif in nascent polypeptide chains, the first step in protein N-glycosylation. N-glycosylation occurs cotranslationally and the complex associates with the Sec61 complex at the channel-forming translocon complex that mediates protein translocation across the endoplasmic reticulum (ER). All subunits are required for a maximal enzyme activity. The chain is Dolichyl-diphosphooligosaccharide--protein glycosyltransferase subunit 1A (OST1A) from Oryza sativa subsp. japonica (Rice).